We begin with the raw amino-acid sequence, 345 residues long: MKQLKRKRKSNFSVQETQTLLKEITKRKEVIFSKQLNTTINVMKRMAWEEIAQCVNAVGEGEQRTGTEVKRRYLDWRALMKRKRMKANMKLVGSGFPLPTSDLDDSLTEDIDEKIAFRNDANFEWQNVADFRDAGGSLTEVKVEEEERDPQSPEFEIEEEEEMLSSVIPDSRRENELPDFPHIDEFFTLNSTPSRPTYDEPHLLMNIEKQKLELEKRRLDIEAERLQVEKERLQIEKERLRHLDLEHERLQLEKERLQIEREKWRLQLVSTEKPALENELGQGEKSMLQPQDIEAEKLKLERERLQLEKDRLQFLKFESEKLQIEKERLQVEKERLRIQKEGHLP.

A Myb-like domain is found at 4 to 77 (LKRKRKSNFS…EVKRRYLDWR (74 aa)). Residue Lys-9 forms a Glycyl lysine isopeptide (Lys-Gly) (interchain with G-Cter in SUMO2) linkage. Ser-106 bears the Phosphoserine mark. Residues Lys-114 and Lys-142 each participate in a glycyl lysine isopeptide (Lys-Gly) (interchain with G-Cter in SUMO2) cross-link. Residues 139 to 175 (TEVKVEEEERDPQSPEFEIEEEEEMLSSVIPDSRREN) are disordered. The residue at position 188 (Thr-188) is a Phosphothreonine. A coiled-coil region spans residues 202 to 344 (HLLMNIEKQK…RLRIQKEGHL (143 aa)). Glycyl lysine isopeptide (Lys-Gly) (interchain with G-Cter in SUMO2) cross-links involve residues Lys-237, Lys-254, and Lys-273.

The sequence is that of Myb/SANT-like DNA-binding domain-containing protein 4 (Msantd4) from Mus musculus (Mouse).